We begin with the raw amino-acid sequence, 431 residues long: Glutamyl-tRNA(Gln) amidotransferase subunit A (431 aa).

Residues K55 and S130 each act as charge relay system in the active site. S154 functions as the Acyl-ester intermediate in the catalytic mechanism.

It belongs to the amidase family. GatA subfamily. Heterotrimer of A, B and C subunits.

The catalysed reaction is L-glutamyl-tRNA(Gln) + L-glutamine + ATP + H2O = L-glutaminyl-tRNA(Gln) + L-glutamate + ADP + phosphate + H(+). Its function is as follows. Allows the formation of correctly charged Gln-tRNA(Gln) through the transamidation of misacylated Glu-tRNA(Gln) in organisms which lack glutaminyl-tRNA synthetase. The reaction takes place in the presence of glutamine and ATP through an activated gamma-phospho-Glu-tRNA(Gln). This is Glutamyl-tRNA(Gln) amidotransferase subunit A from Methanococcus maripaludis (strain C7 / ATCC BAA-1331).